Reading from the N-terminus, the 226-residue chain is Ribonuclease 3 (226 aa).

One can recognise an RNase III domain in the interval Lys-7–Gly-134. Glu-47 is a Mg(2+) binding site. Asp-51 is an active-site residue. Mg(2+) is bound by residues Asp-120 and Glu-123. Glu-123 is a catalytic residue. The 67-residue stretch at Asp-160–Lys-226 folds into the DRBM domain. The interval Lys-201–Lys-226 is disordered. A compositionally biased stretch (low complexity) spans Glu-214 to Lys-226.

Belongs to the ribonuclease III family. Homodimer. Mg(2+) serves as cofactor.

Its subcellular location is the cytoplasm. It carries out the reaction Endonucleolytic cleavage to 5'-phosphomonoester.. Its function is as follows. Digests double-stranded RNA. Involved in the processing of primary rRNA transcript to yield the immediate precursors to the large and small rRNAs (23S and 16S). Processes some mRNAs, and tRNAs when they are encoded in the rRNA operon. Processes pre-crRNA and tracrRNA of type II CRISPR loci if present in the organism. In Lactobacillus johnsonii (strain CNCM I-12250 / La1 / NCC 533), this protein is Ribonuclease 3.